A 745-amino-acid chain; its full sequence is UPF0508 protein YJR030C (745 aa).

This sequence belongs to the UPF0508 family.

This chain is UPF0508 protein YJR030C, found in Saccharomyces cerevisiae (strain ATCC 204508 / S288c) (Baker's yeast).